Reading from the N-terminus, the 466-residue chain is Signal recognition particle 54 kDa protein (466 aa).

GTP-binding positions include 104-111 (GLQGSGKT), 184-188 (DTAGR), and 242-245 (TKLD). The disordered stretch occupies residues 444 to 466 (MQQGGGGGGGGGGGLGGMGPFGD). Positions 446–466 (QGGGGGGGGGGGLGGMGPFGD) are enriched in gly residues.

The protein belongs to the GTP-binding SRP family. SRP54 subfamily. As to quaternary structure, part of the signal recognition particle protein translocation system, which is composed of SRP and FtsY. Archaeal SRP consists of a 7S RNA molecule of 300 nucleotides and two protein subunits: SRP54 and SRP19.

Its subcellular location is the cytoplasm. It catalyses the reaction GTP + H2O = GDP + phosphate + H(+). Functionally, involved in targeting and insertion of nascent membrane proteins into the cytoplasmic membrane. Binds to the hydrophobic signal sequence of the ribosome-nascent chain (RNC) as it emerges from the ribosomes. The SRP-RNC complex is then targeted to the cytoplasmic membrane where it interacts with the SRP receptor FtsY. This chain is Signal recognition particle 54 kDa protein, found in Natronomonas pharaonis (strain ATCC 35678 / DSM 2160 / CIP 103997 / JCM 8858 / NBRC 14720 / NCIMB 2260 / Gabara) (Halobacterium pharaonis).